The chain runs to 835 residues: Microcephalin (835 aa).

The region spanning 1-93 is the BRCT 1 domain; it reads MAAPILKDVV…AHIDESLFPA (93 aa). Phosphoserine occurs at positions 279, 287, 296, and 333. 2 disordered regions span residues 313-381 and 419-443; these read PDQK…RRSI and DNLK…AQLS. T335 is subject to Phosphothreonine. Residues 343-361 are compositionally biased toward basic residues; it reads LLIHSRPRSSSVKRKRVSH. Positions 434-443 are enriched in polar residues; that stretch reads QLPSSPAQLS. Phosphoserine is present on S548. Residues 555 to 584 are disordered; the sequence is AVGLKSTQNKGTTSKISNSSEGEAQSEHEP. Over residues 559-577 the composition is skewed to polar residues; that stretch reads KSTQNKGTTSKISNSSEGE. 2 consecutive BRCT domains span residues 640–730 and 751–833; these read SGRG…PFEL and YRGT…NYLL.

As to quaternary structure, interacts with CDC27 and maybe other components of the APC/C complex. Interacts with histone variant H2AX under DNA damage conditions. Expressed in fetal brain, liver and kidney.

It is found in the cytoplasm. The protein resides in the cytoskeleton. It localises to the microtubule organizing center. The protein localises to the centrosome. Its function is as follows. Implicated in chromosome condensation and DNA damage induced cellular responses. May play a role in neurogenesis and regulation of the size of the cerebral cortex. This is Microcephalin from Homo sapiens (Human).